A 251-amino-acid chain; its full sequence is CDP-diacylglycerol pyrophosphatase (251 aa).

A helical membrane pass occupies residues 4-24 (AGLLFLVMIVIAVVATGIGYW).

It belongs to the Cdh family.

It is found in the cell inner membrane. It carries out the reaction a CDP-1,2-diacyl-sn-glycerol + H2O = a 1,2-diacyl-sn-glycero-3-phosphate + CMP + 2 H(+). It participates in phospholipid metabolism; CDP-diacylglycerol degradation; phosphatidate from CDP-diacylglycerol: step 1/1. The polypeptide is CDP-diacylglycerol pyrophosphatase (Escherichia coli O45:K1 (strain S88 / ExPEC)).